The following is a 387-amino-acid chain: Mitogen-activated protein kinase homolog MMK1 (387 aa).

The Protein kinase domain occupies 55 to 340 (KPPIMPIGKG…VEDALAHPYL (286 aa)). ATP contacts are provided by residues 61-69 (IGKGAYGIV) and Lys84. Asp181 functions as the Proton acceptor in the catalytic mechanism. Thr213 carries the post-translational modification Phosphothreonine. A TXY motif is present at residues 213–215 (TEY). Tyr215 carries the phosphotyrosine modification.

This sequence belongs to the protein kinase superfamily. CMGC Ser/Thr protein kinase family. MAP kinase subfamily. Mg(2+) serves as cofactor. Dually phosphorylated on Thr-213 and Tyr-215, which activates the enzyme. Autophosphorylated. As to expression, roots and stems.

It catalyses the reaction L-seryl-[protein] + ATP = O-phospho-L-seryl-[protein] + ADP + H(+). The catalysed reaction is L-threonyl-[protein] + ATP = O-phospho-L-threonyl-[protein] + ADP + H(+). Activated by tyrosine and threonine phosphorylation. Its function is as follows. May play a role in the mitogenic induction of symbiotic root nodules on Alfalfa by Rhizobium signal molecules. The protein is Mitogen-activated protein kinase homolog MMK1 (MMK1) of Medicago sativa (Alfalfa).